The primary structure comprises 289 residues: ATP phosphoribosyltransferase (289 aa).

This sequence belongs to the ATP phosphoribosyltransferase family. Long subfamily. It depends on Mg(2+) as a cofactor.

It is found in the cytoplasm. The enzyme catalyses 1-(5-phospho-beta-D-ribosyl)-ATP + diphosphate = 5-phospho-alpha-D-ribose 1-diphosphate + ATP. The protein operates within amino-acid biosynthesis; L-histidine biosynthesis; L-histidine from 5-phospho-alpha-D-ribose 1-diphosphate: step 1/9. With respect to regulation, feedback inhibited by histidine. Its function is as follows. Catalyzes the condensation of ATP and 5-phosphoribose 1-diphosphate to form N'-(5'-phosphoribosyl)-ATP (PR-ATP). Has a crucial role in the pathway because the rate of histidine biosynthesis seems to be controlled primarily by regulation of HisG enzymatic activity. The protein is ATP phosphoribosyltransferase of Methanosarcina acetivorans (strain ATCC 35395 / DSM 2834 / JCM 12185 / C2A).